The primary structure comprises 314 residues: GTPase-interacting component 1 (314 aa).

Disordered regions lie at residues 112-156 (SRRH…KHDV), 199-221 (TMDS…QLDS), and 241-261 (LGDS…SFSG). In terms of domain architecture, CRIB spans 126-139 (ISTPFDFHHISHAN). Over residues 140-156 (GKREDNPLESHEEKHDV) the composition is skewed to basic and acidic residues. The segment covering 208 to 221 (ETNNTPNGNKQLDS) has biased composition (polar residues). The span at 251–260 (PSSPSVSSFS) shows a compositional bias: low complexity.

Belongs to the BORG/CEP family. As to quaternary structure, interacts with GTP-bound CDC42.

It localises to the bud neck. Its subcellular location is the bud tip. The protein localises to the cytoplasm. The protein resides in the cell cortex. It is found in the cytoskeleton. In terms of biological role, required for cell size and shape control, bud site selection, bud emergence, actin cytoskeletal organization, mitotic spindle orientation/positioning, and mating projection formation in response to mating pheromone. The sequence is that of GTPase-interacting component 1 (GIC1) from Saccharomyces cerevisiae (strain ATCC 204508 / S288c) (Baker's yeast).